The chain runs to 553 residues: Glycerol kinase 2 (553 aa).

Thr20 is a binding site for substrate. Residue Arg24 coordinates ATP. Substrate contacts are provided by Arg94, Tyr148, and Asp259. ATP-binding positions include Thr281, Gly326, and 427 to 431 (GMTNN). The helical transmembrane segment at 526–546 (IFSSLPLGFFIVSSMVMLIGA) threads the bilayer.

It belongs to the FGGY kinase family. As to quaternary structure, interacts with ARMC12. Interacts with PLD6. As to expression, testis-specific. Expressed in the midpiece of spermatozoa.

The protein localises to the mitochondrion outer membrane. It localises to the cytoplasm. The enzyme catalyses glycerol + ATP = sn-glycerol 3-phosphate + ADP + H(+). It participates in polyol metabolism; glycerol degradation via glycerol kinase pathway; sn-glycerol 3-phosphate from glycerol: step 1/1. Functionally, key enzyme in the regulation of glycerol uptake and metabolism. Essential for male fertility and sperm mitochondrial sheath formation. Required for proper arrangement of crescent-like mitochondria to form the mitochondrial sheath during spermatogenesis. Can induce mitochondrial clustering through interactions with PLD6 and up-regulation of phosphatidic acid synthesis in the mitochondria. This Homo sapiens (Human) protein is Glycerol kinase 2 (GK2).